A 182-amino-acid chain; its full sequence is ATP-dependent protease subunit HslV (182 aa).

The active site involves Thr10. Positions 164, 167, and 170 each coordinate Na(+).

Belongs to the peptidase T1B family. HslV subfamily. As to quaternary structure, a double ring-shaped homohexamer of HslV is capped on each side by a ring-shaped HslU homohexamer. The assembly of the HslU/HslV complex is dependent on binding of ATP.

It is found in the cytoplasm. The catalysed reaction is ATP-dependent cleavage of peptide bonds with broad specificity.. Allosterically activated by HslU binding. Its function is as follows. Protease subunit of a proteasome-like degradation complex believed to be a general protein degrading machinery. This is ATP-dependent protease subunit HslV from Chelativorans sp. (strain BNC1).